Reading from the N-terminus, the 193-residue chain is Chromophore lyase CpcS/CpeS 4 (193 aa).

Belongs to the CpcS/CpeS biliprotein lyase family.

Functionally, covalently attaches a chromophore to Cys residue(s) of phycobiliproteins. The chain is Chromophore lyase CpcS/CpeS 4 from Trichodesmium erythraeum (strain IMS101).